The sequence spans 177 residues: R-phycoerythrin beta chain (177 aa).

Cysteine 50 and cysteine 61 together coordinate phycourobilin. Residue asparagine 72 is modified to N4-methylasparagine. 2 residues coordinate (2R,3E)-phycoerythrobilin: cysteine 82 and cysteine 158.

It belongs to the phycobiliprotein family. In terms of assembly, heterodimer of an alpha and a beta chain. In terms of processing, contains two covalently linked phycoerythrobilin chromophores and one covalently linked phycourobilin chromophore.

It is found in the plastid. Its subcellular location is the chloroplast thylakoid membrane. Its function is as follows. Light-harvesting photosynthetic bile pigment-protein from the phycobiliprotein complex. In Porphyra purpurea (Red seaweed), this protein is R-phycoerythrin beta chain (cpeB).